The primary structure comprises 211 residues: Large ribosomal subunit protein eL13 (211 aa).

K16 bears the N6-acetyllysine mark. 3 positions are modified to phosphoserine: S52, S77, and S106. Glycyl lysine isopeptide (Lys-Gly) (interchain with G-Cter in SUMO2) cross-links involve residues K123 and K145. A Glycyl lysine isopeptide (Lys-Gly) (interchain with G-Cter in SUMO1); alternate cross-link involves residue K174. Residues K174 and K177 each participate in a glycyl lysine isopeptide (Lys-Gly) (interchain with G-Cter in SUMO2); alternate cross-link. The residue at position 177 (K177) is an N6-acetyllysine; alternate.

Belongs to the eukaryotic ribosomal protein eL13 family. As to quaternary structure, component of the large ribosomal subunit.

The protein localises to the cytoplasm. Component of the large ribosomal subunit. The ribosome is a large ribonucleoprotein complex responsible for the synthesis of proteins in the cell. The polypeptide is Large ribosomal subunit protein eL13 (Rpl13) (Mus musculus (Mouse)).